The sequence spans 108 residues: Large ribosomal subunit protein uL23 (108 aa).

The protein belongs to the universal ribosomal protein uL23 family. As to quaternary structure, part of the 50S ribosomal subunit. Contacts protein L29, and trigger factor when it is bound to the ribosome.

In terms of biological role, one of the early assembly proteins it binds 23S rRNA. One of the proteins that surrounds the polypeptide exit tunnel on the outside of the ribosome. Forms the main docking site for trigger factor binding to the ribosome. In Polaromonas naphthalenivorans (strain CJ2), this protein is Large ribosomal subunit protein uL23.